The primary structure comprises 309 residues: MYNGVLLLHKPVGMTSHDCVMKIRKLLKTKKVGHTGTLDPEVSGVLPICVGRATKIVEYLTEKSKTYDAEVTLGCSTETEDQTGEVTEKKPVLAPPDEQTVQSVLRSLEGTIEQVPPMYSAVKVGGKKLYEYARAGIEVERPKRTITIHHIELTSEIRHEGDKARFRFVVTCSKGTYVRTLAVTIGEKLGYPAHMSNLVRTASGPFTLDECLTFEDVEGLIADGTLSEKLVPIERALDHLPKWIISDTLAKKVENGAVLETPGSFSHLTSEDRIAVFTEAGRCTAVYYPHPTKTGLLKPAKVLVQKSEQ.

The Nucleophile role is filled by Asp-39.

The protein belongs to the pseudouridine synthase TruB family. Type 1 subfamily.

The enzyme catalyses uridine(55) in tRNA = pseudouridine(55) in tRNA. Functionally, responsible for synthesis of pseudouridine from uracil-55 in the psi GC loop of transfer RNAs. This chain is tRNA pseudouridine synthase B, found in Bacillus licheniformis (strain ATCC 14580 / DSM 13 / JCM 2505 / CCUG 7422 / NBRC 12200 / NCIMB 9375 / NCTC 10341 / NRRL NRS-1264 / Gibson 46).